The chain runs to 163 residues: Transcription elongation factor GreB (163 aa).

Residues 54 to 76 (GKRRMREIDRRIRFLTKRLEAAV) are a coiled coil.

Belongs to the GreA/GreB family. GreB subfamily.

Functionally, necessary for efficient RNA polymerase transcription elongation past template-encoded arresting sites. The arresting sites in DNA have the property of trapping a certain fraction of elongating RNA polymerases that pass through, resulting in locked ternary complexes. Cleavage of the nascent transcript by cleavage factors such as GreA or GreB allows the resumption of elongation from the new 3'terminus. GreB releases sequences of up to 9 nucleotides in length. The protein is Transcription elongation factor GreB of Neisseria meningitidis serogroup B (strain ATCC BAA-335 / MC58).